The chain runs to 382 residues: MKLHEYQARDLLARYGIPVTGGGVAVTPAEAHAIAEQIGGPVVVKAQVHVGGRGKAGGVKLAQTPAEAEQVAGQILGMNIKGLTVEKVLVAEAISYERELYLSAILDRGSKRITMIASAEGGVEIEEVAKTNPSAIVKIAAHPTMGLLDFQARELAFRIGLRDGKQARQFAQIAGALYRAFVESDASLAEINPLVIKNDGNLLALDSKVLLDESGLFRHPDLAALRDPSAEPEAERRAREADITFIKLDGNIGCMVNGAGLAMATMDVIKLSGGEPANFLDIGGGAGKEKVKAALQIILSDPNVKAVLFNIFGGITRVDEVARGILAALEEVPTDVPMVARLVGTNEEVGRALLAGSKLIPAATLAEGAQKAVAAARGELVS.

The ATP-grasp domain maps to 9–237 (RDLLARYGIP…PSAEPEAERR (229 aa)). ATP is bound by residues Lys-45, 52–54 (GRG), Ile-94, and Glu-99. Mg(2+)-binding residues include Asn-192 and Asp-206. Residues Asn-257 and 314-316 (GIT) each bind substrate.

The protein belongs to the succinate/malate CoA ligase beta subunit family. In terms of assembly, heterotetramer of two alpha and two beta subunits. The cofactor is Mg(2+).

It carries out the reaction succinate + ATP + CoA = succinyl-CoA + ADP + phosphate. It catalyses the reaction GTP + succinate + CoA = succinyl-CoA + GDP + phosphate. Its pathway is carbohydrate metabolism; tricarboxylic acid cycle; succinate from succinyl-CoA (ligase route): step 1/1. In terms of biological role, succinyl-CoA synthetase functions in the citric acid cycle (TCA), coupling the hydrolysis of succinyl-CoA to the synthesis of either ATP or GTP and thus represents the only step of substrate-level phosphorylation in the TCA. The beta subunit provides nucleotide specificity of the enzyme and binds the substrate succinate, while the binding sites for coenzyme A and phosphate are found in the alpha subunit. The protein is Succinate--CoA ligase [ADP-forming] subunit beta of Chloroflexus aggregans (strain MD-66 / DSM 9485).